The sequence spans 458 residues: GDP-fucose protein O-fucosyltransferase 3 (458 aa).

At methionine 1 to serine 11 the chain is on the cytoplasmic side. Residues phenylalanine 12–leucine 32 traverse the membrane as a helical; Signal-anchor for type II membrane protein segment. Residues glycine 33–aspartate 458 are Lumenal-facing. Asparagine 92, asparagine 150, and asparagine 300 each carry an N-linked (GlcNAc...) asparagine glycan. Cysteines 371 and 374 form a disulfide. Asparagine 445 carries an N-linked (GlcNAc...) asparagine glycan.

It belongs to the glycosyltransferase 10 family.

It localises to the endoplasmic reticulum membrane. The catalysed reaction is L-threonyl-[protein] + GDP-beta-L-fucose = 3-O-(alpha-L-fucosyl)-L-threonyl-[protein] + GDP + H(+). The enzyme catalyses L-seryl-[protein] + GDP-beta-L-fucose = 3-O-(alpha-L-fucosyl)-L-seryl-[protein] + GDP + H(+). The protein operates within protein modification; protein glycosylation. Protein O-fucosyltransferase that specifically catalyzes O-fucosylation of serine or threonine residues in EMI domains of target proteins. Attaches fucose through an O-glycosidic linkage. O-fucosylation of EMI domain-containing proteins may be required for facilitating protein folding and secretion. In Danio rerio (Zebrafish), this protein is GDP-fucose protein O-fucosyltransferase 3 (fut10).